An 82-amino-acid chain; its full sequence is Large ribosomal subunit protein uL23 (82 aa).

It belongs to the universal ribosomal protein uL23 family. In terms of assembly, part of the 50S ribosomal subunit. Contacts protein L29.

Binds to 23S rRNA. One of the proteins that surrounds the polypeptide exit tunnel on the outside of the ribosome. The sequence is that of Large ribosomal subunit protein uL23 from Sulfurisphaera tokodaii (strain DSM 16993 / JCM 10545 / NBRC 100140 / 7) (Sulfolobus tokodaii).